Consider the following 465-residue polypeptide: Adenosine 3'-phospho 5'-phosphosulfate transporter 1 (465 aa).

10 consecutive transmembrane segments (helical) span residues 13-33 (LVIC…SDLL), 61-81 (FLKL…GFLI), 142-162 (AVQL…WGVL), 185-205 (QFLV…YLQW), 270-290 (SYEY…MSGS), 299-319 (VTTL…SFTA), 339-359 (GVNL…GGFM), 370-390 (KFVF…LFIY), 391-407 (HTID…IMTL), and 424-444 (ISLL…LRVY).

It belongs to the nucleotide-sugar transporter family. SLC35B subfamily. In terms of tissue distribution, expressed throughout embryogenesis. During oogenesis, it is expressed strongly in the nurse cells of the germline. Maternally expressed at the syncytial blastoderm stage. Zygotically expressed, from after germ-band elongation in the invaginating salivary gland placodes. Remains expressed predominantly in this tissue throughout embryogenesis, but low-level expression may also be present throughout the embryo.

Its subcellular location is the golgi apparatus membrane. Its function is as follows. Mediates the transport of adenosine 3'-phospho 5'-phosphosulfate (PAPS), from cytosol into Golgi. PAPS is a universal sulfuryl donor for sulfation events that take place in the Golgi. Required for the dorsoventral patterning, suggesting that it mediates the transport of the sulfate donor required for the sulfotransferase activity of pip (pipe). This is Adenosine 3'-phospho 5'-phosphosulfate transporter 1 (sll) from Drosophila melanogaster (Fruit fly).